Consider the following 151-residue polypeptide: Flagellar assembly factor FliW (151 aa).

The protein belongs to the FliW family. Interacts with translational regulator CsrA and flagellin(s).

The protein localises to the cytoplasm. Its function is as follows. Acts as an anti-CsrA protein, binds CsrA and prevents it from repressing translation of its target genes, one of which is flagellin. Binds to flagellin and participates in the assembly of the flagellum. This Lachnospira eligens (strain ATCC 27750 / DSM 3376 / VPI C15-48 / C15-B4) (Eubacterium eligens) protein is Flagellar assembly factor FliW.